The chain runs to 128 residues: Protein C10 (128 aa).

This sequence belongs to the UPF0456 family.

It is found in the cytoplasm. The polypeptide is Protein C10 (Xenopus tropicalis (Western clawed frog)).